The sequence spans 31 residues: Putative gene 37 protein (31 aa).

The chain is Putative gene 37 protein (37) from Bacillus subtilis (Bacteriophage SP01).